Here is a 1562-residue protein sequence, read N- to C-terminus: Phospholipid-transporting ATPase dnf1 (1562 aa).

4 disordered regions span residues 1-38, 55-94, 115-134, and 146-166; these read MKSS…ADDG, LPLG…SDSR, TPST…KKAH, and PLDD…NGRP. The Extracellular portion of the chain corresponds to 1–275; sequence MKSSGIAGDS…IAIMQMIPGW (275 aa). Positions 12–21 are enriched in polar residues; sequence GFETNFLNET. Residues 60–69 show a composition bias toward acidic residues; sequence DENELDEIDI. Residues 71–86 are compositionally biased toward basic and acidic residues; that stretch reads GDSKKLDSVEVDESHD. A helical transmembrane segment spans residues 276 to 296; the sequence is STTGTYTTIIPLLIFISIAIL. Residues 297-574 are Cytoplasmic-facing; it reads REGFDNYRRY…APSMQKVTNR (278 aa). Residues 347–406 are disordered; it reads SQESASRSTIRSTDEREPERTSEDPPQLPPSPSSPSSPALSVKPNIDPQPPLYNSTLTTT. Over residues 358-369 the composition is skewed to basic and acidic residues; the sequence is STDEREPERTSE. Positions 372–381 are enriched in pro residues; the sequence is PQLPPSPSSP. The chain crosses the membrane as a helical span at residues 575–595; that stretch reads IVIFIFALVVSMAIYCTAAYF. At 596–614 the chain is on the extracellular side; the sequence is VWQKKVERKLWYLTNSKLS. Residues 615 to 635 form a helical membrane-spanning segment; sequence FVPILVSFIILYNTMVPISLY. The Cytoplasmic portion of the chain corresponds to 636-1309; it reads VSMEIIRVFQ…YILGTFYKEQ (674 aa). D684 acts as the 4-aspartylphosphate intermediate in catalysis. Positions 684, 685, 686, 794, 843, 845, 848, and 866 each coordinate ATP. D684 provides a ligand contact to Mg(2+). T686 serves as a coordination point for Mg(2+). Phosphoserine is present on S954. ATP-binding positions include R1022, T1023, T1102, G1103, D1104, 1181 to 1188, R1216, and K1222; that span reads VIVIDGST. Position 1243 (D1243) interacts with Mg(2+). The ATP site is built by N1246 and D1247. The helical transmembrane segment at 1310–1330 threads the bilayer; sequence FFFLMQAIMQPFVGYTGQSLY. Over 1331–1332 the chain is Extracellular; it reads ES. Residues 1333–1353 traverse the membrane as a helical segment; it reads WGLTCFNTLFSSLCVIGLGIF. Residues 1354–1381 are Cytoplasmic-facing; sequence EKDLSASTVIAVPELYQKGINNEAFNWR. A helical membrane pass occupies residues 1382–1402; that stretch reads VYFGWCSIAFIQAFLVFYVTY. Residues 1403–1414 lie on the Extracellular side of the membrane; the sequence is SLFGMKELNDNN. The helical transmembrane segment at 1415–1435 threads the bilayer; sequence IFAYGQLIFTAAIFIMNFKLV. Residues 1436–1443 lie on the Cytoplasmic side of the membrane; the sequence is FIEMQYIN. The chain crosses the membrane as a helical span at residues 1444–1464; sequence IISIIVLVLTSLAWFLFNIFI. Residues 1465-1490 are Extracellular-facing; it reads SEHYPDKNLYLARSQFLHHFGKNPSW. Residues 1491–1511 traverse the membrane as a helical segment; that stretch reads WLTMLFVMVCALTIDIVAQML. Over 1512-1562 the chain is Cytoplasmic; that stretch reads RRTLRPTDTDIFVEMENDAFVRSRFEQESGEFLQANAPSVDEIEQYLKSRD.

Belongs to the cation transport ATPase (P-type) (TC 3.A.3) family. Type IV subfamily. It depends on Mg(2+) as a cofactor.

Its subcellular location is the golgi apparatus. The protein resides in the trans-Golgi network membrane. The protein localises to the endosome membrane. The catalysed reaction is ATP + H2O + phospholipidSide 1 = ADP + phosphate + phospholipidSide 2.. It carries out the reaction a 1,2-diacyl-sn-glycero-3-phosphocholine(out) + ATP + H2O = a 1,2-diacyl-sn-glycero-3-phosphocholine(in) + ADP + phosphate + H(+). It catalyses the reaction a 1,2-diacyl-sn-glycero-3-phosphoethanolamine(out) + ATP + H2O = a 1,2-diacyl-sn-glycero-3-phosphoethanolamine(in) + ADP + phosphate + H(+). In terms of biological role, catalytic component of a P4-ATPase flippase complex which catalyzes the hydrolysis of ATP coupled to the transport of phosphatidylcholine and small amounts of phosphatidylethanolamine from the lumen to the cytosolic leaflet of the trans-Golgi network and ensures the maintenance of asymmetric distribution of phospholipids. May be involved in transport from early endosomes to the trans-Golgi network (TGN). The sequence is that of Phospholipid-transporting ATPase dnf1 from Schizosaccharomyces pombe (strain 972 / ATCC 24843) (Fission yeast).